A 710-amino-acid polypeptide reads, in one-letter code: Integrator complex subunit 10 (710 aa).

The tract at residues 366-393 (IHKKRKLAEGREKTMSSDDEDPSGKARS) is disordered. A compositionally biased stretch (basic and acidic residues) spans 372-381 (LAEGREKTMS).

The protein belongs to the Integrator subunit 10 family. In terms of assembly, component of the Integrator complex, composed of core subunits INTS1, INTS2, INTS3, INTS4, INTS5, INTS6, INTS7, INTS8, INTS9/RC74, INTS10, INTS11/CPSF3L, INTS12, INTS13, INTS14 and INTS15. The core complex associates with protein phosphatase 2A subunits PPP2CA and PPP2R1A, to form the Integrator-PP2A (INTAC) complex. INTS10 is part of the tail subcomplex, composed of INTS10, INTS13, INTS14 and INTS15.

It localises to the nucleus. In terms of biological role, component of the integrator complex, a multiprotein complex that terminates RNA polymerase II (Pol II) transcription in the promoter-proximal region of genes. The integrator complex provides a quality checkpoint during transcription elongation by driving premature transcription termination of transcripts that are unfavorably configured for transcriptional elongation: the complex terminates transcription by (1) catalyzing dephosphorylation of the C-terminal domain (CTD) of Pol II subunit POLR2A/RPB1 and SUPT5H/SPT5, (2) degrading the exiting nascent RNA transcript via endonuclease activity and (3) promoting the release of Pol II from bound DNA. The integrator complex is also involved in terminating the synthesis of non-coding Pol II transcripts, such as enhancer RNAs (eRNAs), small nuclear RNAs (snRNAs), telomerase RNAs and long non-coding RNAs (lncRNAs). In Gallus gallus (Chicken), this protein is Integrator complex subunit 10 (INTS10).